Consider the following 455-residue polypeptide: Exodeoxyribonuclease 7 large subunit (455 aa).

Belongs to the XseA family. Heterooligomer composed of large and small subunits.

Its subcellular location is the cytoplasm. The catalysed reaction is Exonucleolytic cleavage in either 5'- to 3'- or 3'- to 5'-direction to yield nucleoside 5'-phosphates.. Functionally, bidirectionally degrades single-stranded DNA into large acid-insoluble oligonucleotides, which are then degraded further into small acid-soluble oligonucleotides. The sequence is that of Exodeoxyribonuclease 7 large subunit from Lactobacillus acidophilus (strain ATCC 700396 / NCK56 / N2 / NCFM).